The sequence spans 187 residues: Putative manganese efflux pump MntP (187 aa).

6 consecutive transmembrane segments (helical) span residues 3-23 (YYTL…VSVG), 39-59 (IALC…YVGS), 65-85 (ISEF…INMI), 106-126 (LTML…SFAF), 129-149 (VNIW…SLFG), and 166-186 (LLGG…HRVF).

This sequence belongs to the MntP (TC 9.B.29) family.

The protein localises to the cell inner membrane. In terms of biological role, probably functions as a manganese efflux pump. The protein is Putative manganese efflux pump MntP of Actinobacillus succinogenes (strain ATCC 55618 / DSM 22257 / CCUG 43843 / 130Z).